A 312-amino-acid polypeptide reads, in one-letter code: Ribosomal protein L11 methyltransferase (312 aa).

S-adenosyl-L-methionine-binding residues include Thr160, Gly181, Asp203, and Asn246.

It belongs to the methyltransferase superfamily. PrmA family.

It is found in the cytoplasm. It catalyses the reaction L-lysyl-[protein] + 3 S-adenosyl-L-methionine = N(6),N(6),N(6)-trimethyl-L-lysyl-[protein] + 3 S-adenosyl-L-homocysteine + 3 H(+). Its function is as follows. Methylates ribosomal protein L11. This chain is Ribosomal protein L11 methyltransferase, found in Staphylococcus epidermidis (strain ATCC 12228 / FDA PCI 1200).